Consider the following 285-residue polypeptide: uncharacterized protein (285 aa).

Disordered regions lie at residues 115–139 (AAGKASVQARRSRKEADVQTKQERN) and 152–183 (EHDVNTKATNKDTDKDLKTDPPLNPPRGNRGV). 2 stretches are compositionally biased toward basic and acidic residues: residues 128–138 (KEADVQTKQER) and 152–170 (EHDVNTKATNKDTDKDLKT).

This is an uncharacterized protein from Escherichia coli (strain K12).